A 415-amino-acid polypeptide reads, in one-letter code: Histidine--tRNA ligase (415 aa).

This sequence belongs to the class-II aminoacyl-tRNA synthetase family. In terms of assembly, homodimer.

The protein resides in the cytoplasm. The enzyme catalyses tRNA(His) + L-histidine + ATP = L-histidyl-tRNA(His) + AMP + diphosphate + H(+). This is Histidine--tRNA ligase from Clostridium botulinum (strain 657 / Type Ba4).